The following is a 165-amino-acid chain: 2-halobenzoate 1,2-dioxygenase small subunit (165 aa).

It belongs to the bacterial ring-hydroxylating dioxygenase beta subunit family. Heterohexamer of 3 large (CbdA) subunits and 3 small (CbdB) subunits. The heterohexamer is part of 2-halobenzoate dioxygenase two component enzyme system. The other component is a NADH:acceptor reductase (CdbC).

The catalysed reaction is a 2-halobenzoate + NADH + O2 + H(+) = a halide anion + catechol + CO2 + NAD(+). It participates in xenobiotic degradation; benzoate degradation via CoA ligation. In terms of biological role, component of 2-halobenzoate dioxygenase multicomponent enzyme system which catalyzes the incorporation of both atoms of molecular oxygen into 2-halobenzoate to form catechol. The sequence is that of 2-halobenzoate 1,2-dioxygenase small subunit (cbdB) from Burkholderia cepacia (Pseudomonas cepacia).